The primary structure comprises 438 residues: Protein kinase PINOID (438 aa).

The tract at residues 1–24 (MLRESDGEMSLGTTNSPISSGTES) is disordered. Positions 11 to 24 (LGTTNSPISSGTES) are enriched in polar residues. The 320-residue stretch at 75 to 394 (FRLMRRIGAG…AAEVKVHPFF (320 aa)) folds into the Protein kinase domain. ATP is bound by residues 81-89 (IGAGDIGTV) and K109. The Proton acceptor role is filled by D205. One can recognise an AGC-kinase C-terminal domain in the interval 395-438 (KGLNFALIRTLTPPEIPSSVVKKPMKSATFSGRSSNKPAAFDYF).

This sequence belongs to the protein kinase superfamily. Ser/Thr protein kinase family. As to quaternary structure, interacts with PDK1, CML12 and PBP1. Component of a complex made of PINs (e.g. PIN1 and PIN2), MAB4/MELs (e.g. NPY1/MAB4 and NPY5/MEL1) and AGC kinases (e.g. D6PK and PID) at the plasma membrane. Binds directly to PIN2, NPY1/MAB4 and NPY5/MEL1. In terms of processing, autophosphorylated. Phosphorylated by PDK1. Expressed in root hair cells, shoot xylem parenchyma cells and endodermis around the vasculature. Expressed in anther primordia, vasculature of the growing flower stalk, young pedicels and bracts and developing sepals, but not in petals. In pistils, transiently expressed in the vasculature of the style and the septum, and in the integuments and funiculus of the developing ovule.

The protein resides in the cytoplasm. Its subcellular location is the cytosol. It localises to the cell membrane. It carries out the reaction L-seryl-[protein] + ATP = O-phospho-L-seryl-[protein] + ADP + H(+). The catalysed reaction is L-threonyl-[protein] + ATP = O-phospho-L-threonyl-[protein] + ADP + H(+). Activated by magnesium and PDK1. Inhibited by staurosporine. Repressed by calcium. Its function is as follows. Serine/threonine-protein kinase involved in the regulation of auxin signaling. Acts as a positive regulator of cellular auxin efflux and regulates organ development by enhancing polar auxin transport. Phosphorylates conserved serine residues in the PIN auxin efflux carriers. Phosphorylation of PIN proteins is required and sufficient for apical-basal PIN polarity that enables directional intercellular auxin fluxes, which mediate differential growth, tissue patterning and organogenesis. Phosphorylates PIN proteins (e.g. PIN1 and PIN2), especially when NPY proteins (e.g. NPY1/MAB4 and NPY5/MEL1) are recruited at the plasma membrane; this enhances the polarized localizations (apical or basal) of PINs in the cell by limiting their lateral diffusion-based escape. Acts in association with PIN1 to control the establishment of bilateral symmetry and promotion of cotyledon outgrowth. Regulates root gravitropism through modulation of PIN2-dependent basipetal auxin transport. Required for polarization of PIN3-dependent auxin transport for hypocotyl gravitropic response. The protein kinase activity of PID is essential for its auxin efflux regulatory function. PID kinase and PP2A phosphatase activities antagonistically regulate phosphorylation of PIN proteins, affecting PIN sorting. The polypeptide is Protein kinase PINOID (Arabidopsis thaliana (Mouse-ear cress)).